The chain runs to 266 residues: Metallo-beta-lactamase domain-containing protein 1 (266 aa).

The tract at residues 48–71 (LPQTRGPASSHRESPRGSGGAEAA) is disordered. Residues His114, His116, Asp118, His119, His169, Asp192, and His231 each contribute to the Zn(2+) site. Positions 229-266 (PGHGPPFRVLREASQPETEGGGNSQQEPVVGDEEPALH) are disordered.

Belongs to the metallo-beta-lactamase superfamily. Glyoxalase II family. As to quaternary structure, homodimer. It depends on Zn(2+) as a cofactor.

It localises to the cytoplasm. It is found in the cytosol. Its subcellular location is the nucleus. It catalyses the reaction a ribonucleotidyl-ribonucleotide-RNA + H2O = a 3'-end ribonucleotide-RNA + a 5'-end 5'-phospho-ribonucleoside-RNA + H(+). Its function is as follows. Endoribonuclease that catalyzes the hydrolysis of histone-coding pre-mRNA 3'-end. Involved in histone pre-mRNA processing during the S-phase of the cell cycle, which is required for entering/progressing through S-phase. Cleaves histone pre-mRNA at a major and a minor cleavage site after the 5'-ACCCA-3' and the 5'-ACCCACA-3' sequence, respectively, and located downstream of the stem-loop. May require the presence of the HDE element located at the histone pre-RNA 3'-end to avoid non-specific cleavage. In Homo sapiens (Human), this protein is Metallo-beta-lactamase domain-containing protein 1.